The chain runs to 682 residues: DNA ligase (682 aa).

Residues 42–46 (DAEYD), 91–92 (SL), and Glu-124 each bind NAD(+). The N6-AMP-lysine intermediate role is filled by Lys-126. Residues Arg-147, Glu-184, Lys-302, and Lys-326 each coordinate NAD(+). Residues Cys-420, Cys-423, Cys-438, and Cys-444 each coordinate Zn(2+). In terms of domain architecture, BRCT spans 603 to 682 (IADNPLKGKS…QEFIALTGEN (80 aa)).

The protein belongs to the NAD-dependent DNA ligase family. LigA subfamily. The cofactor is Mg(2+). Requires Mn(2+) as cofactor.

The catalysed reaction is NAD(+) + (deoxyribonucleotide)n-3'-hydroxyl + 5'-phospho-(deoxyribonucleotide)m = (deoxyribonucleotide)n+m + AMP + beta-nicotinamide D-nucleotide.. Its function is as follows. DNA ligase that catalyzes the formation of phosphodiester linkages between 5'-phosphoryl and 3'-hydroxyl groups in double-stranded DNA using NAD as a coenzyme and as the energy source for the reaction. It is essential for DNA replication and repair of damaged DNA. This is DNA ligase from Actinobacillus pleuropneumoniae serotype 7 (strain AP76).